The following is a 148-amino-acid chain: 3-dehydroquinate dehydratase (148 aa).

The active-site Proton acceptor is the Tyr26. Asn75, His81, and Asp88 together coordinate substrate. His101 acts as the Proton donor in catalysis. Substrate is bound by residues 102–103 (LS) and Arg112.

This sequence belongs to the type-II 3-dehydroquinase family. Homododecamer.

It carries out the reaction 3-dehydroquinate = 3-dehydroshikimate + H2O. It participates in metabolic intermediate biosynthesis; chorismate biosynthesis; chorismate from D-erythrose 4-phosphate and phosphoenolpyruvate: step 3/7. Its function is as follows. Catalyzes a trans-dehydration via an enolate intermediate. The polypeptide is 3-dehydroquinate dehydratase (Shewanella frigidimarina (strain NCIMB 400)).